The chain runs to 122 residues: Large ribosomal subunit protein uL14 (122 aa).

It belongs to the universal ribosomal protein uL14 family. In terms of assembly, part of the 50S ribosomal subunit. Forms a cluster with proteins L3 and L19. In the 70S ribosome, L14 and L19 interact and together make contacts with the 16S rRNA in bridges B5 and B8.

In terms of biological role, binds to 23S rRNA. Forms part of two intersubunit bridges in the 70S ribosome. The chain is Large ribosomal subunit protein uL14 from Paraburkholderia phymatum (strain DSM 17167 / CIP 108236 / LMG 21445 / STM815) (Burkholderia phymatum).